Reading from the N-terminus, the 195-residue chain is Keratin-associated protein 4-11 (195 aa).

A run of 27 repeats spans residues C5–V9, C24–S28, C29–T33, C34–T38, C44–S48, C49–Q53, C54–V58, C59–T63, C64–R68, C69–S73, C74–S78, C79–S83, C84–Q88, C89–M93, C94–T98, C99–R103, C104–S108, C109–S113, C114–S118, C119–Q123, C124–V128, C129–T133, C134–S138, C144–S148, C149–S153, C154–C158, and C159–P163. Residues C5–P163 are 27 X 5 AA repeats of C-C-[GIKRQVHEL]-[SPTR]-[STVQRMC].

It belongs to the KRTAP type 4 family. Interacts with hair keratins. In terms of tissue distribution, expressed in the hair follicles.

In terms of biological role, in the hair cortex, hair keratin intermediate filaments are embedded in an interfilamentous matrix, consisting of hair keratin-associated proteins (KRTAP), which are essential for the formation of a rigid and resistant hair shaft through their extensive disulfide bond cross-linking with abundant cysteine residues of hair keratins. The matrix proteins include the high-sulfur and high-glycine-tyrosine keratins. This chain is Keratin-associated protein 4-11 (KRTAP4-11), found in Homo sapiens (Human).